A 369-amino-acid polypeptide reads, in one-letter code: Erythronate-4-phosphate dehydrogenase (369 aa).

Serine 45 and threonine 66 together coordinate substrate. Position 146 (aspartate 146) interacts with NAD(+). Arginine 209 is a catalytic residue. Aspartate 233 is an NAD(+) binding site. The active site involves glutamate 238. Residue histidine 255 is the Proton donor of the active site. An NAD(+)-binding site is contributed by glycine 258.

It belongs to the D-isomer specific 2-hydroxyacid dehydrogenase family. PdxB subfamily. Homodimer.

The protein localises to the cytoplasm. It catalyses the reaction 4-phospho-D-erythronate + NAD(+) = (R)-3-hydroxy-2-oxo-4-phosphooxybutanoate + NADH + H(+). It functions in the pathway cofactor biosynthesis; pyridoxine 5'-phosphate biosynthesis; pyridoxine 5'-phosphate from D-erythrose 4-phosphate: step 2/5. Its function is as follows. Catalyzes the oxidation of erythronate-4-phosphate to 3-hydroxy-2-oxo-4-phosphonooxybutanoate. This is Erythronate-4-phosphate dehydrogenase from Porphyromonas gingivalis (strain ATCC BAA-308 / W83).